We begin with the raw amino-acid sequence, 53 residues long: uncharacterized protein (53 aa).

A helical membrane pass occupies residues 24–44 (LMTFIAVNAVLSLILIRAVIL).

It is found in the membrane. This is an uncharacterized protein from Methanocaldococcus jannaschii (strain ATCC 43067 / DSM 2661 / JAL-1 / JCM 10045 / NBRC 100440) (Methanococcus jannaschii).